The chain runs to 343 residues: Putative dihydroflavonol 4-reductase (343 aa).

Tyr-150 contributes to the NADP(+) binding site.

The protein belongs to the NAD(P)-dependent epimerase/dehydratase family. Dihydroflavonol-4-reductase subfamily.

It carries out the reaction a (2R,3S,4S)-leucoanthocyanidin + NADP(+) = a (2R,3R)-dihydroflavonol + NADPH + H(+). It participates in secondary metabolite biosynthesis; flavonoid biosynthesis. The polypeptide is Putative dihydroflavonol 4-reductase (dfrA) (Synechocystis sp. (strain ATCC 27184 / PCC 6803 / Kazusa)).